The primary structure comprises 396 residues: 3-amino-4-hydroxybenzoate 2-monooxygenase PtnB3 (396 aa).

Residues A19, 38-39 (EQ), and R112 each bind FAD. Residue Y217 is the Proton acceptor of the active site. An FAD-binding site is contributed by D295.

It belongs to the 6-hydroxynicotinate 3-monooxygenase family. FAD serves as cofactor.

It carries out the reaction 3-amino-4-hydroxybenzoate + NADPH + O2 + H(+) = 3-amino-2,4-dihydroxybenzoate + NADP(+) + H2O. The protein operates within antibiotic biosynthesis. Functionally, part of a gene cluster involved in the biosynthesis of thioplatencin (ThioPTN) and platencin (PTN), potent and selective inhibitors of bacterial and mammalian fatty acid synthases. Catalyzes the hydroxylation of 3-amino-4-hydroxybenzoate (3,4-AHBA) to 3-amino-2,4-dihydroxybenzoate (3,2,4-ADHBA). This chain is 3-amino-4-hydroxybenzoate 2-monooxygenase PtnB3, found in Streptomyces platensis.